Consider the following 69-residue polypeptide: Conotoxin Eb6.22 (69 aa).

Residues 1–17 (VLIIAVLFLTACQLTTA) form the signal peptide. A propeptide spanning residues 18–41 (ETYSRGRQKHRARRSTDKNSKWTR) is cleaved from the precursor. Disulfide bonds link Cys43-Cys57, Cys50-Cys61, and Cys56-Cys68.

Belongs to the conotoxin O1 superfamily. As to expression, expressed by the venom duct.

The protein resides in the secreted. This Conus ebraeus (Hebrew cone) protein is Conotoxin Eb6.22 (E1).